A 266-amino-acid polypeptide reads, in one-letter code: MIEKLILGRFVPGESLIHGLDARTKLLAGFYYIGILFLANNWWTYALMVLFTLMVVQMTGIKLKVFIKGVKPLIWLILFTVVMQILFASGGTIYFDWGPFTISSFGLLNGVFVFLRFVLIIIMSTVITLTTTPMNLTDAIAYILRPFAVLKVPVNDIALMISVALRFIPTLMGETDKIMKAQRARGVDFGEGNLFEQMKVVVPIFIPLFVSSFNRAEELADAMEARGYQGGEGRTRFRILHWHFGDLIAACVMILLTAGLVILRTS.

Helical transmembrane passes span 33-53 (IGIL…LFTL), 73-93 (LIWL…GGTI), 107-127 (LLNG…STVI), 152-172 (VPVN…PTLM), and 243-263 (HFGD…LVIL).

The protein belongs to the energy-coupling factor EcfT family. In terms of assembly, forms a stable energy-coupling factor (ECF) transporter complex composed of 2 membrane-embedded substrate-binding proteins (S component), 2 ATP-binding proteins (A component) and 2 transmembrane proteins (T component). May be able to interact with more than 1 S component at a time.

Its subcellular location is the cell membrane. Functionally, transmembrane (T) component of an energy-coupling factor (ECF) ABC-transporter complex. Unlike classic ABC transporters this ECF transporter provides the energy necessary to transport a number of different substrates. In Listeria monocytogenes serotype 1/2a (strain 08-5578), this protein is Energy-coupling factor transporter transmembrane protein EcfT 1.